The sequence spans 266 residues: Glutamate racemase (266 aa).

Residues 9 to 10 and 41 to 42 contribute to the substrate site; these read DS and YG. Cys72 serves as the catalytic Proton donor/acceptor. 73–74 provides a ligand contact to substrate; sequence NT. Catalysis depends on Cys184, which acts as the Proton donor/acceptor. Residue 185–186 participates in substrate binding; it reads TH.

The protein belongs to the aspartate/glutamate racemases family.

It catalyses the reaction L-glutamate = D-glutamate. It participates in cell wall biogenesis; peptidoglycan biosynthesis. Provides the (R)-glutamate required for cell wall biosynthesis. This chain is Glutamate racemase, found in Staphylococcus carnosus (strain TM300).